A 1733-amino-acid polypeptide reads, in one-letter code: Gag-Pol polyprotein (1733 aa).

A lipid anchor (N-myristoyl glycine; by host) is attached at glycine 2. The span at 108–121 (LPTAPVLPPGPSAQ) shows a compositional bias: pro residues. Disordered stretches follow at residues 108–218 (LPTA…LRMG), 449–469 (KEER…RRRH), and 511–550 (WAKD…EPRI). The PTAP/PSAP motif signature appears at 109–112 (PTAP). The LYPX(n)L motif signature appears at 128 to 132 (LYPAL). The short motif at 161–164 (PPPY) is the PPXY motif element. Serine 190 is subject to Phosphoserine; by host. Positions 436–476 (EEREERIRREIEEKEERRRAEDEQRERERDRRRHREMSKLL) form a coiled coil. The segment covering 449–464 (KEERRRAEDEQRERER) has biased composition (basic and acidic residues). The segment at 500–517 (DQCAYCKEKGHWAKDCPK) adopts a CCHC-type zinc-finger fold. Residues 526–535 (RPQTSLLTLG) show a composition bias toward low complexity. A Peptidase A2 domain is found at 559 to 629 (VTFLVDTGAQ…CPYPLLGRDL (71 aa)). Aspartate 564 serves as the catalytic Protease; shared with dimeric partner. RNA is bound by residues tyrosine 721, aspartate 771, arginine 773, and proline 787. Residues 739–930 (LDQGILVPCQ…KQVKYLGYLL (192 aa)) form the Reverse transcriptase domain. Aspartate 807 is a binding site for Mg(2+). Positions 851 and 853 each coordinate RNA. Mg(2+)-binding residues include aspartate 881 and aspartate 882. Residues arginine 941, arginine 955, arginine 958, and phenylalanine 966 each contribute to the DNA site. Residues lysine 1054 and lysine 1055 each coordinate RNA. Tryptophan 1063 provides a ligand contact to DNA. An RNA-binding site is contributed by lysine 1082. Position 1113 (arginine 1113) interacts with DNA. The 147-residue stretch at 1172 to 1318 (PDADYTWYTD…ADQAAREAAM (147 aa)) folds into the RNase H type-1 domain. Aspartate 1181 contributes to the Mg(2+) binding site. Positions 1184 and 1186 each coordinate RNA. Glutamine 1187, serine 1214, and glutamine 1216 together coordinate DNA. Positions 1219 and 1240 each coordinate Mg(2+). Residues arginine 1242 and arginine 1266 each contribute to the RNA site. The Mg(2+) site is built by aspartate 1310, aspartate 1453, and aspartate 1512. The Integrase catalytic domain maps to 1442-1600 (RGHRPGTHWE…TPYEILYGAP (159 aa)).

In terms of assembly, homohexamer. Further associates as homomultimer. The virus core is composed of a lattice formed from hexagonal rings, each containing six capsid monomers. As to quaternary structure, homodimer. The protease is a homodimer, whose active site consists of two apposed aspartic acid residues. The reverse transcriptase is a monomer. Requires Mg(2+) as cofactor. The cofactor is Mn(2+). Post-translationally, specific enzymatic cleavages by the viral protease yield mature proteins. The protease is released by autocatalytic cleavage. The polyprotein is cleaved during and after budding, this process is termed maturation. Sumoylated. Required for virus replication. In terms of processing, phosphorylated on serine residues.

Its subcellular location is the host cell membrane. The protein resides in the virion. It catalyses the reaction DNA(n) + a 2'-deoxyribonucleoside 5'-triphosphate = DNA(n+1) + diphosphate. The enzyme catalyses Endonucleolytic cleavage to 5'-phosphomonoester.. In terms of biological role, plays a role in budding and is processed by the viral protease during virion maturation outside the cell. During budding, it recruits, in a PPXY-dependent or independent manner, Nedd4-like ubiquitin ligases that conjugate ubiquitin molecules to Gag, or to Gag binding host factors. Interaction with HECT ubiquitin ligases probably link the viral protein to the host ESCRT pathway and facilitate release. Functionally, targets Gag and gag-pol polyproteins to the plasma membrane via a multipartite membrane binding signal, that includes its myristoylated N-terminus. Also mediates nuclear localization of the pre-integration complex. Its function is as follows. Forms the spherical core of the virion that encapsulates the genomic RNA-nucleocapsid complex. Involved in the packaging and encapsidation of two copies of the genome. Binds with high affinity to conserved UCUG elements within the packaging signal, located near the 5'-end of the genome. This binding is dependent on genome dimerization. In terms of biological role, the aspartyl protease mediates proteolytic cleavages of Gag and Gag-Pol polyproteins during or shortly after the release of the virion from the plasma membrane. Cleavages take place as an ordered, step-wise cascade to yield mature proteins. This process is called maturation. Displays maximal activity during the budding process just prior to particle release from the cell. Functionally, multifunctional enzyme that converts the viral dimeric RNA genome into dsDNA in the cytoplasm, shortly after virus entry into the cell. This enzyme displays a DNA polymerase activity that can copy either DNA or RNA templates, and a ribonuclease H (RNase H) activity that cleaves the RNA strand of RNA-DNA heteroduplexes in a partially processive 3' to 5' endonucleasic mode. Conversion of viral genomic RNA into dsDNA requires many steps. A tRNA binds to the primer-binding site (PBS) situated at the 5' end of the viral RNA. RT uses the 3' end of the tRNA primer to perform a short round of RNA-dependent minus-strand DNA synthesis. The reading proceeds through the U5 region and ends after the repeated (R) region which is present at both ends of viral RNA. The portion of the RNA-DNA heteroduplex is digested by the RNase H, resulting in a ssDNA product attached to the tRNA primer. This ssDNA/tRNA hybridizes with the identical R region situated at the 3' end of viral RNA. This template exchange, known as minus-strand DNA strong stop transfer, can be either intra- or intermolecular. RT uses the 3' end of this newly synthesized short ssDNA to perform the RNA-dependent minus-strand DNA synthesis of the whole template. RNase H digests the RNA template except for a polypurine tract (PPT) situated at the 5' end of the genome. It is not clear if both polymerase and RNase H activities are simultaneous. RNase H probably can proceed both in a polymerase-dependent (RNA cut into small fragments by the same RT performing DNA synthesis) and a polymerase-independent mode (cleavage of remaining RNA fragments by free RTs). Secondly, RT performs DNA-directed plus-strand DNA synthesis using the PPT that has not been removed by RNase H as primers. PPT and tRNA primers are then removed by RNase H. The 3' and 5' ssDNA PBS regions hybridize to form a circular dsDNA intermediate. Strand displacement synthesis by RT to the PBS and PPT ends produces a blunt ended, linear dsDNA copy of the viral genome that includes long terminal repeats (LTRs) at both ends. Its function is as follows. Catalyzes viral DNA integration into the host chromosome, by performing a series of DNA cutting and joining reactions. This enzyme activity takes place after virion entry into a cell and reverse transcription of the RNA genome in dsDNA. The first step in the integration process is 3' processing. This step requires a complex comprising the viral genome, matrix protein and integrase. This complex is called the pre-integration complex (PIC). The integrase protein removes 2 nucleotides from each 3' end of the viral DNA, leaving recessed CA OH's at the 3' ends. In the second step that requires cell division, the PIC enters cell nucleus. In the third step, termed strand transfer, the integrase protein joins the previously processed 3' ends to the 5' ends of strands of target cellular DNA at the site of integration. The last step is viral DNA integration into host chromosome. The sequence is that of Gag-Pol polyprotein (gag-pol) from Homo sapiens (Human).